The following is a 571-amino-acid chain: MQTNLSQLIKVARGEAKADLVLLNARVVNVFNAEIEPANVAVFGGQIAGVGDYTLGNRVLDLKGAYLLPGLINGHTHVESSMLDISQYARAVIAHGTSALITDLHEISNVCGKEGIDYVLSASADLPLNIFLQVPSCVPATHLETAGAEINSNDVTELLRLPNVTGLGEMMNFPGVLFGIPSVLDKIEAASGKVLDGHAPGLSGKDLNAYISAGIHSDHECIQLDEAKEKLARGMYIMIREGSSEKNLTELLPLVTDKTYKRCIFVVDDRSCADLQRDGDIDAVVRKAIKLGLDPVRAIQLASINTAEYFRLNGHGAIAPGYLANMIVCQDLNQLDIDMVFHKGELVAEKGQVLFKPQSHVPKSLLSSMHIKPFDIKDLAIKGSSTQMPVIEVIPGQIVTRRLNLKIPAENGVLTPDIEQDLLKIVVLERHCQSGNIGRGLIKGFGLKKGAIASSVAHDSHNVIAVGTNDADIYTAVKELERINGGIALVVDGKISASVPLPVAGLLSTQPLEKVVDALEEINKQAAGLGCKLSAPFATLSFMALPVIPELRLTDLGLVDVNAFKLIPQET.

Belongs to the metallo-dependent hydrolases superfamily. Adenine deaminase family. Requires Mn(2+) as cofactor.

It catalyses the reaction adenine + H2O + H(+) = hypoxanthine + NH4(+). This chain is Adenine deaminase, found in Dehalococcoides mccartyi (strain ATCC BAA-2266 / KCTC 15142 / 195) (Dehalococcoides ethenogenes (strain 195)).